A 306-amino-acid chain; its full sequence is tRNA dimethylallyltransferase (306 aa).

ATP is bound at residue 14-21 (GPTAAGKS). 16 to 21 (TAAGKS) provides a ligand contact to substrate. Positions 39 to 42 (DSRL) are interaction with substrate tRNA.

It belongs to the IPP transferase family. Monomer. Mg(2+) serves as cofactor.

The enzyme catalyses adenosine(37) in tRNA + dimethylallyl diphosphate = N(6)-dimethylallyladenosine(37) in tRNA + diphosphate. Functionally, catalyzes the transfer of a dimethylallyl group onto the adenine at position 37 in tRNAs that read codons beginning with uridine, leading to the formation of N6-(dimethylallyl)adenosine (i(6)A). The protein is tRNA dimethylallyltransferase of Synechococcus elongatus (strain ATCC 33912 / PCC 7942 / FACHB-805) (Anacystis nidulans R2).